The sequence spans 480 residues: Glutamate--tRNA ligase (480 aa).

Positions 21–31 (PSPTGYLHVGG) match the 'HIGH' region motif. Zn(2+) contacts are provided by cysteine 110, cysteine 112, cysteine 137, and histidine 139. Positions 248–252 (KLSKR) match the 'KMSKS' region motif. Lysine 251 is a binding site for ATP.

This sequence belongs to the class-I aminoacyl-tRNA synthetase family. Glutamate--tRNA ligase type 1 subfamily. In terms of assembly, monomer. The cofactor is Zn(2+).

It localises to the cytoplasm. The enzyme catalyses tRNA(Glu) + L-glutamate + ATP = L-glutamyl-tRNA(Glu) + AMP + diphosphate. In terms of biological role, catalyzes the attachment of glutamate to tRNA(Glu) in a two-step reaction: glutamate is first activated by ATP to form Glu-AMP and then transferred to the acceptor end of tRNA(Glu). This chain is Glutamate--tRNA ligase, found in Haemophilus influenzae (strain PittEE).